The sequence spans 157 residues: SsrA-binding protein (157 aa).

Residues 132-157 form a disordered region; the sequence is EHDKRDTIKEREGKREVERAMKSRHR.

It belongs to the SmpB family.

The protein resides in the cytoplasm. Its function is as follows. Required for rescue of stalled ribosomes mediated by trans-translation. Binds to transfer-messenger RNA (tmRNA), required for stable association of tmRNA with ribosomes. tmRNA and SmpB together mimic tRNA shape, replacing the anticodon stem-loop with SmpB. tmRNA is encoded by the ssrA gene; the 2 termini fold to resemble tRNA(Ala) and it encodes a 'tag peptide', a short internal open reading frame. During trans-translation Ala-aminoacylated tmRNA acts like a tRNA, entering the A-site of stalled ribosomes, displacing the stalled mRNA. The ribosome then switches to translate the ORF on the tmRNA; the nascent peptide is terminated with the 'tag peptide' encoded by the tmRNA and targeted for degradation. The ribosome is freed to recommence translation, which seems to be the essential function of trans-translation. The sequence is that of SsrA-binding protein from Paracidovorax citrulli (strain AAC00-1) (Acidovorax citrulli).